Consider the following 715-residue polypeptide: MAVQVAKKTPLRRVRNIGIMAHIDAGKTTTTERILLYTGLTHKLGEVHDGNAVMDWMAQERERGITITSAATTVFWGGIEGSAKNGKKDSQEGRHSRIPEQYRINIIDTPGHVDFTVEVERSLRVLDGAIALFDSVAGVEPQSETVWRQADKYRVPRIAFVNKMDRIGADFYHAVETMRQRLGANPVPVQLPIGAEADFVGIVDLVEMKAIIYKDDLGAEWDETEIPEELRERAEEYRERLIEAAAEHDEEVMVAYLEGEEIEPDRIRAALRKATLELQITPVFVGSAFKNKGIQPLLDGVIDYLPSPLDVPPVRGKTLDGEEASREPDEEAPLAALAFKVQADPHVGKLTYIRVYSGTLKAGSYVMNTTKGVRERVGRLLQMHANTREQRDEVYAGELVAAVGLSNTSTGDTLVAVDDPHPIVLEQMVFPEPVIDQAIEPKTKADQEKLSQALQRLAEEDPTFRVRTDEETGQTVIAGMGELHLEIILDRLTREFKVDANIGKPQVAYRETIRRRVEGVEGRFVRQTGGRGQYGHAIINMEPHEGGYEFEDRIVGGVIPRDYIPAVDKGIREALESGVLAGYPVVDVKVELVDGSYHEVDSSEMAFQIAGSMAAKEALKRARPVLLEPIMAVEVTVPEEFMGDVMGDLSSRRGQIQGMDSRGNSQVIRAMVPLAEMFGYATSLRSRTQGRATFTMQFDHYAEVPQNIAEKIAER.

The tr-type G domain occupies 12 to 309 (RRVRNIGIMA…GVIDYLPSPL (298 aa)). Residues 21-28 (AHIDAGKT), 108-112 (DTPGH), and 162-165 (NKMD) each bind GTP.

Belongs to the TRAFAC class translation factor GTPase superfamily. Classic translation factor GTPase family. EF-G/EF-2 subfamily.

It localises to the cytoplasm. Functionally, catalyzes the GTP-dependent ribosomal translocation step during translation elongation. During this step, the ribosome changes from the pre-translocational (PRE) to the post-translocational (POST) state as the newly formed A-site-bound peptidyl-tRNA and P-site-bound deacylated tRNA move to the P and E sites, respectively. Catalyzes the coordinated movement of the two tRNA molecules, the mRNA and conformational changes in the ribosome. The polypeptide is Elongation factor G (Rubrobacter xylanophilus (strain DSM 9941 / JCM 11954 / NBRC 16129 / PRD-1)).